The chain runs to 74 residues: Cytochrome b (74 aa).

A helical membrane pass occupies residues 34-54 (FGSLLAICLVTQILTGLLLAM).

The protein belongs to the cytochrome b family. As to quaternary structure, the cytochrome bc1 complex contains 11 subunits: 3 respiratory subunits (MT-CYB, CYC1 and UQCRFS1), 2 core proteins (UQCRC1 and UQCRC2) and 6 low-molecular weight proteins (UQCRH/QCR6, UQCRB/QCR7, UQCRQ/QCR8, UQCR10/QCR9, UQCR11/QCR10 and a cleavage product of UQCRFS1). This cytochrome bc1 complex then forms a dimer. It depends on heme as a cofactor.

It is found in the mitochondrion inner membrane. Functionally, component of the ubiquinol-cytochrome c reductase complex (complex III or cytochrome b-c1 complex) that is part of the mitochondrial respiratory chain. The b-c1 complex mediates electron transfer from ubiquinol to cytochrome c. Contributes to the generation of a proton gradient across the mitochondrial membrane that is then used for ATP synthesis. The chain is Cytochrome b (MT-CYB) from Anser caerulescens (Snow goose).